Here is a 229-residue protein sequence, read N- to C-terminus: Large ribosomal subunit protein uL1 (229 aa).

It belongs to the universal ribosomal protein uL1 family. In terms of assembly, part of the 50S ribosomal subunit.

Functionally, binds directly to 23S rRNA. The L1 stalk is quite mobile in the ribosome, and is involved in E site tRNA release. Its function is as follows. Protein L1 is also a translational repressor protein, it controls the translation of the L11 operon by binding to its mRNA. This chain is Large ribosomal subunit protein uL1, found in Gemmatimonas aurantiaca (strain DSM 14586 / JCM 11422 / NBRC 100505 / T-27).